The sequence spans 106 residues: Iron-sulfur cluster assembly protein CyaY (106 aa).

Belongs to the frataxin family.

Involved in iron-sulfur (Fe-S) cluster assembly. May act as a regulator of Fe-S biogenesis. The sequence is that of Iron-sulfur cluster assembly protein CyaY from Serratia proteamaculans (strain 568).